The following is a 233-amino-acid chain: Protein DOUBLE-STRAND BREAK FORMATION (233 aa).

In terms of assembly, interacts with PRD1; this interaction facilitates a binding to PRD3. As to expression, specifically expressed in buds.

In terms of biological role, required for meiotic double-strand break (DSB) formation, the initial event for meiotic recombination. This Arabidopsis thaliana (Mouse-ear cress) protein is Protein DOUBLE-STRAND BREAK FORMATION.